The following is a 111-amino-acid chain: Cytochrome c oxidase subunit 6A1, mitochondrial (111 aa).

Residues 1–26 (MASAVLSASRVSGLLGRALPRVGRPM) constitute a mitochondrion transit peptide. Residues 27–36 (SSGAHGEEGS) lie on the Mitochondrial matrix side of the membrane. The helical transmembrane segment at 37–61 (ARIWKALTYFVALPGVGVSMLNVFL) threads the bilayer. Topologically, residues 62 to 111 (KSRHEEHERPEFVAYPHLRIRTKPFPWGDGNHTLFHNPHMNPLPTGYEDE) are mitochondrial intermembrane.

Belongs to the cytochrome c oxidase subunit 6A family. As to quaternary structure, component of the cytochrome c oxidase (complex IV, CIV), a multisubunit enzyme composed of 14 subunits. The complex is composed of a catalytic core of 3 subunits MT-CO1, MT-CO2 and MT-CO3, encoded in the mitochondrial DNA, and 11 supernumerary subunits COX4I, COX5A, COX5B, COX6A, COX6B, COX6C, COX7A, COX7B, COX7C, COX8 and NDUFA4, which are encoded in the nuclear genome. The complex exists as a monomer or a dimer and forms supercomplexes (SCs) in the inner mitochondrial membrane with NADH-ubiquinone oxidoreductase (complex I, CI) and ubiquinol-cytochrome c oxidoreductase (cytochrome b-c1 complex, complex III, CIII), resulting in different assemblies (supercomplex SCI(1)III(2)IV(1) and megacomplex MCI(2)III(2)IV(2)).

It localises to the mitochondrion inner membrane. It functions in the pathway energy metabolism; oxidative phosphorylation. Component of the cytochrome c oxidase, the last enzyme in the mitochondrial electron transport chain which drives oxidative phosphorylation. The respiratory chain contains 3 multisubunit complexes succinate dehydrogenase (complex II, CII), ubiquinol-cytochrome c oxidoreductase (cytochrome b-c1 complex, complex III, CIII) and cytochrome c oxidase (complex IV, CIV), that cooperate to transfer electrons derived from NADH and succinate to molecular oxygen, creating an electrochemical gradient over the inner membrane that drives transmembrane transport and the ATP synthase. Cytochrome c oxidase is the component of the respiratory chain that catalyzes the reduction of oxygen to water. Electrons originating from reduced cytochrome c in the intermembrane space (IMS) are transferred via the dinuclear copper A center (CU(A)) of subunit 2 and heme A of subunit 1 to the active site in subunit 1, a binuclear center (BNC) formed by heme A3 and copper B (CU(B)). The BNC reduces molecular oxygen to 2 water molecules unsing 4 electrons from cytochrome c in the IMS and 4 protons from the mitochondrial matrix. The polypeptide is Cytochrome c oxidase subunit 6A1, mitochondrial (Cox6a1) (Rattus norvegicus (Rat)).